A 376-amino-acid polypeptide reads, in one-letter code: 4-hydroxy-3-methylbut-2-en-1-yl diphosphate synthase (flavodoxin) (376 aa).

[4Fe-4S] cluster is bound by residues cysteine 272, cysteine 275, cysteine 307, and glutamate 314.

It belongs to the IspG family. The cofactor is [4Fe-4S] cluster.

It carries out the reaction (2E)-4-hydroxy-3-methylbut-2-enyl diphosphate + oxidized [flavodoxin] + H2O + 2 H(+) = 2-C-methyl-D-erythritol 2,4-cyclic diphosphate + reduced [flavodoxin]. It functions in the pathway isoprenoid biosynthesis; isopentenyl diphosphate biosynthesis via DXP pathway; isopentenyl diphosphate from 1-deoxy-D-xylulose 5-phosphate: step 5/6. Its function is as follows. Converts 2C-methyl-D-erythritol 2,4-cyclodiphosphate (ME-2,4cPP) into 1-hydroxy-2-methyl-2-(E)-butenyl 4-diphosphate. This is 4-hydroxy-3-methylbut-2-en-1-yl diphosphate synthase (flavodoxin) from Blochmanniella pennsylvanica (strain BPEN).